The following is a 98-amino-acid chain: LLGLCLITQILTGLFLAMHYTADISTAFSSVAHICRDVNYGWLIRNVHANGASFFFICLYLHVARGMYYGSYLQKETWNIGVVLLLLTMMTAFVGYVL.

3 consecutive transmembrane segments (helical) span residues 1 to 18 (LLGLCLITQILTGLFLAM), 42 to 63 (WLIRNVHANGASFFFICLYLHV), and 78 to 98 (WNIGVVLLLLTMMTAFVGYVL). Heme b is bound by residues histidine 48 and histidine 62.

This sequence belongs to the cytochrome b family. As to quaternary structure, the cytochrome bc1 complex contains 3 respiratory subunits (MT-CYB, CYC1 and UQCRFS1), 2 core proteins (UQCRC1 and UQCRC2) and probably 6 low-molecular weight proteins. Heme b is required as a cofactor.

The protein localises to the mitochondrion inner membrane. Component of the ubiquinol-cytochrome c reductase complex (complex III or cytochrome b-c1 complex) that is part of the mitochondrial respiratory chain. The b-c1 complex mediates electron transfer from ubiquinol to cytochrome c. Contributes to the generation of a proton gradient across the mitochondrial membrane that is then used for ATP synthesis. The protein is Cytochrome b (mt-cyb) of Scaphirhynchus platorynchus (Shovelnose sturgeon).